Reading from the N-terminus, the 125-residue chain is Large ribosomal subunit protein uL22 (125 aa).

The protein belongs to the universal ribosomal protein uL22 family. As to quaternary structure, part of the 50S ribosomal subunit.

Its function is as follows. This protein binds specifically to 23S rRNA; its binding is stimulated by other ribosomal proteins, e.g. L4, L17, and L20. It is important during the early stages of 50S assembly. It makes multiple contacts with different domains of the 23S rRNA in the assembled 50S subunit and ribosome. The globular domain of the protein is located near the polypeptide exit tunnel on the outside of the subunit, while an extended beta-hairpin is found that lines the wall of the exit tunnel in the center of the 70S ribosome. This is Large ribosomal subunit protein uL22 from Erythrobacter litoralis (strain HTCC2594).